The chain runs to 222 residues: Protein GrpE (222 aa).

Disordered regions lie at residues 1 to 21 (MNDG…ENGQ) and 200 to 222 (KGGP…PEGA).

It belongs to the GrpE family. In terms of assembly, homodimer.

It is found in the cytoplasm. Participates actively in the response to hyperosmotic and heat shock by preventing the aggregation of stress-denatured proteins, in association with DnaK and GrpE. It is the nucleotide exchange factor for DnaK and may function as a thermosensor. Unfolded proteins bind initially to DnaJ; upon interaction with the DnaJ-bound protein, DnaK hydrolyzes its bound ATP, resulting in the formation of a stable complex. GrpE releases ADP from DnaK; ATP binding to DnaK triggers the release of the substrate protein, thus completing the reaction cycle. Several rounds of ATP-dependent interactions between DnaJ, DnaK and GrpE are required for fully efficient folding. This chain is Protein GrpE, found in Chelativorans sp. (strain BNC1).